Reading from the N-terminus, the 510-residue chain is MKDHLIIFDTTLRDGEQSPGASMTREEKVRIARQLERMRVDVIEAGFPAASNGDFEAVKAVAAAIKGSTICGLARAIEGDIRRAGEALRGANSARIHTFIATSPIHMEKKLRMSPDQVVEQAVKAVKFARQYTDDVEFSPEDAGRSDITFLCRVLEAVIDAGAGTVNIPDTVGYTMPQQFGELIRTLRERIPNSDKVIFSVHCHNDLGLAVANSLSAVMNGARQVECTVNGLGERAGNASLEEVVMAVRTRQDFFPCDTRIDSVHIVPASKLVSGITGFPVQPNKAIVGANAFAHESGIHQDGVLKHRETYEIMRAEDVGWGANKLLLGKHSGRNAFRSRLAELGIELESEETLNATFMRFKELADKKHDIFDEDLHALVSDDAAALQEHYKLLSLTAHSETGETPHASIVIGEEGRESRAESDGSGPVDATFRAIEKILNSGVELQLYSVNAITSGTDSQGEVTVRLQKSGRIVNGNGADTDIVVASAKAYLSALNKLHSKLERAHPQV.

The 263-residue stretch at 5 to 267 folds into the Pyruvate carboxyltransferase domain; the sequence is LIIFDTTLRD…DTRIDSVHIV (263 aa). The Mn(2+) site is built by aspartate 14, histidine 202, histidine 204, and asparagine 238. The interval 392–510 is regulatory domain; it reads KLLSLTAHSE…SKLERAHPQV (119 aa).

It belongs to the alpha-IPM synthase/homocitrate synthase family. LeuA type 1 subfamily. Homodimer. It depends on Mn(2+) as a cofactor.

Its subcellular location is the cytoplasm. It carries out the reaction 3-methyl-2-oxobutanoate + acetyl-CoA + H2O = (2S)-2-isopropylmalate + CoA + H(+). The protein operates within amino-acid biosynthesis; L-leucine biosynthesis; L-leucine from 3-methyl-2-oxobutanoate: step 1/4. Functionally, catalyzes the condensation of the acetyl group of acetyl-CoA with 3-methyl-2-oxobutanoate (2-ketoisovalerate) to form 3-carboxy-3-hydroxy-4-methylpentanoate (2-isopropylmalate). The chain is 2-isopropylmalate synthase from Nitrosospira multiformis (strain ATCC 25196 / NCIMB 11849 / C 71).